The primary structure comprises 478 residues: Solute carrier family 7 member 13 (478 aa).

Over 1-14 (MAMDSKKEIRLKRE) the chain is Cytoplasmic. A helical membrane pass occupies residues 15–35 (LGYFWGTNFLIINIIGAGIFV). Residues 36–47 (SPKGVLQHSSMN) are Extracellular-facing. Residues 48–68 (VGVSLCVWAVCAVLTLTSALC) traverse the membrane as a helical segment. Residues 69-89 (SAEIGITFPYSGAHYYFLKRC) are Cytoplasmic-facing. Residues 90 to 110 (FGPLVAFLRLWTSLFLGPGLI) form a helical membrane-spanning segment. The Extracellular portion of the chain corresponds to 111–129 (ASQALLLAEYGVQPFYPSC). Residues 130–150 (SAPILPRKCLALAMLWIVGIL) form a helical membrane-spanning segment. Over 151–163 (NSRGVKELSWLQT) the chain is Cytoplasmic. A helical membrane pass occupies residues 164–184 (VSSVLKVGILGVISLSGLFLL). The Extracellular segment spans residues 185 to 208 (VRGKKENVQRLQNAFDAEFPEVSQ). A helical membrane pass occupies residues 209–229 (LIEAIFQGYFAFSGGGCFTCI). Residues 230-242 (AGELKKPSKTIPR) lie on the Cytoplasmic side of the membrane. Residues 243–263 (CIFTGLPLVTVVYLLANISYL) form a helical membrane-spanning segment. Over 264-288 (TVLTPQEMLSSDAVALTWTDRVIPQ) the chain is Extracellular. The helical transmembrane segment at 289–309 (FTWTVPFAISASLFINLVINV) threads the bilayer. The Cytoplasmic portion of the chain corresponds to 310–338 (LETSRVLYIASENGQLPLLFCALNVHSSP). A helical transmembrane segment spans residues 339-359 (FIAVLLIISMASILIVLTNLI). Position 360 (Asp360) is a topological domain, extracellular. A helical membrane pass occupies residues 361 to 381 (LINYLYFVVSIWTALSIIGIL). Residues 382–395 (KLRYQEPNLHRPYK) lie on the Cytoplasmic side of the membrane. The chain crosses the membrane as a helical span at residues 396 to 416 (VFLPFTFIALGITLSLVLIPL). Topologically, residues 417–423 (VKSPKLH) are extracellular. Residues 424-444 (YIYVFLFLLSGLVFYVPLIHF) traverse the membrane as a helical segment. At 445–478 (KVKFVWFQKLTCYLQLLFNICIPDVSDDHIHEES) the chain is on the cytoplasmic side.

The protein belongs to the amino acid-polyamine-organocation (APC) superfamily. As to quaternary structure, disulfide-linked heterodimer composed of the catalytic light subunit SLC7A13 and the heavy subunit SLC3A1. Expressed in renal tubules in the outer stripe of the outer medulla and medullary ray (at protein level). Detected in male but not in female kidney.

The protein resides in the apical cell membrane. It carries out the reaction L-cystine(out) + L-aspartate(in) = L-cystine(in) + L-aspartate(out). The catalysed reaction is L-cystine(out) = L-cystine(in). It catalyses the reaction L-aspartate(in) + L-glutamate(out) = L-aspartate(out) + L-glutamate(in). The enzyme catalyses L-aspartate(in) + L-glutamine(out) = L-aspartate(out) + L-glutamine(in). It carries out the reaction L-aspartate(in) + L-methionine(out) = L-aspartate(out) + L-methionine(in). The catalysed reaction is L-leucine(out) + L-aspartate(in) = L-leucine(in) + L-aspartate(out). It catalyses the reaction L-valine(out) + L-aspartate(in) = L-valine(in) + L-aspartate(out). The enzyme catalyses L-aspartate(in) + L-phenylalanine(out) = L-aspartate(out) + L-phenylalanine(in). It carries out the reaction L-tyrosine(out) + L-aspartate(in) = L-tyrosine(in) + L-aspartate(out). The catalysed reaction is L-tryptophan(out) + L-aspartate(in) = L-tryptophan(in) + L-aspartate(out). Functionally, associates with SLC3A1/rBAT to form a functional heterodimeric complex that transports anionic and neutral amino acids across the apical plasma membrane of renal epithelium. Preferentially mediates exchange transport, but can also operate via facilitated diffusion. May act as a major transporter for L-cystine in late proximal tubules, ensuring its reabsorption from the luminal fluid in exchange for cytosolic L-glutamate or L-aspartate. The polypeptide is Solute carrier family 7 member 13 (Mus musculus (Mouse)).